Consider the following 117-residue polypeptide: Glycine cleavage system H-like protein (117 aa).

The Lipoyl-binding domain maps to 21–103; sequence IVRLGLSSRM…ESEGWFVVLQ (83 aa). Residue Lys62 is modified to N6-lipoyllysine.

This sequence belongs to the GcvH family. (R)-lipoate is required as a cofactor.

This is Glycine cleavage system H-like protein from Chlamydia muridarum (strain MoPn / Nigg).